The chain runs to 121 residues: Large ribosomal subunit protein eL34B (121 aa).

This sequence belongs to the eukaryotic ribosomal protein eL34 family. In terms of assembly, component of the large ribosomal subunit (LSU). Mature yeast ribosomes consist of a small (40S) and a large (60S) subunit. The 40S small subunit contains 1 molecule of ribosomal RNA (18S rRNA) and 33 different proteins (encoded by 57 genes). The large 60S subunit contains 3 rRNA molecules (25S, 5.8S and 5S rRNA) and 46 different proteins (encoded by 81 genes).

It is found in the cytoplasm. Its function is as follows. Component of the ribosome, a large ribonucleoprotein complex responsible for the synthesis of proteins in the cell. The small ribosomal subunit (SSU) binds messenger RNAs (mRNAs) and translates the encoded message by selecting cognate aminoacyl-transfer RNA (tRNA) molecules. The large subunit (LSU) contains the ribosomal catalytic site termed the peptidyl transferase center (PTC), which catalyzes the formation of peptide bonds, thereby polymerizing the amino acids delivered by tRNAs into a polypeptide chain. The nascent polypeptides leave the ribosome through a tunnel in the LSU and interact with protein factors that function in enzymatic processing, targeting, and the membrane insertion of nascent chains at the exit of the ribosomal tunnel. The polypeptide is Large ribosomal subunit protein eL34B (Saccharomyces cerevisiae (strain ATCC 204508 / S288c) (Baker's yeast)).